Consider the following 379-residue polypeptide: Serine/threonine-protein kinase spe-6 (379 aa).

The region spanning 26–302 is the Protein kinase domain; the sequence is WKVLRNIYSG…SQAATEHQVT (277 aa). Residues 32–40 and K55 each bind ATP; that span reads IYSGPFSDV. The active-site Proton acceptor is the D147. A disordered region spans residues 331–379; the sequence is ASAKLDAKDNANESMDIEFDDMPPKEGISKSLSAEKSCTKNVETARTEK. Positions 360-372 are enriched in polar residues; sequence KSLSAEKSCTKNV.

This sequence belongs to the protein kinase superfamily. CK1 Ser/Thr protein kinase family.

It carries out the reaction L-seryl-[protein] + ATP = O-phospho-L-seryl-[protein] + ADP + H(+). The enzyme catalyses L-threonyl-[protein] + ATP = O-phospho-L-threonyl-[protein] + ADP + H(+). Serine/threonine-protein kinase which is involved in spermatogenesis. In spermatocytes, regulates meiosis and the localization and assembly of major sperm protein (MSP) into fibrous bodies. In addition, may suppress the initiation of spermiogenesis downstream of spe-8, spe-12, spe-27 and spe-29. This is Serine/threonine-protein kinase spe-6 from Caenorhabditis elegans.